Consider the following 351-residue polypeptide: UDP-3-O-acylglucosamine N-acyltransferase (351 aa).

The active-site Proton acceptor is the histidine 240.

Belongs to the transferase hexapeptide repeat family. LpxD subfamily. Homotrimer.

The catalysed reaction is a UDP-3-O-[(3R)-3-hydroxyacyl]-alpha-D-glucosamine + a (3R)-hydroxyacyl-[ACP] = a UDP-2-N,3-O-bis[(3R)-3-hydroxyacyl]-alpha-D-glucosamine + holo-[ACP] + H(+). It functions in the pathway bacterial outer membrane biogenesis; LPS lipid A biosynthesis. Its function is as follows. Catalyzes the N-acylation of UDP-3-O-acylglucosamine using 3-hydroxyacyl-ACP as the acyl donor. Is involved in the biosynthesis of lipid A, a phosphorylated glycolipid that anchors the lipopolysaccharide to the outer membrane of the cell. The sequence is that of UDP-3-O-acylglucosamine N-acyltransferase from Pseudomonas fluorescens (strain Pf0-1).